The following is a 410-amino-acid chain: NADH-quinone oxidoreductase subunit D (410 aa).

Belongs to the complex I 49 kDa subunit family. As to quaternary structure, NDH-1 is composed of 14 different subunits. Subunits NuoB, C, D, E, F, and G constitute the peripheral sector of the complex.

It localises to the cell inner membrane. The enzyme catalyses a quinone + NADH + 5 H(+)(in) = a quinol + NAD(+) + 4 H(+)(out). NDH-1 shuttles electrons from NADH, via FMN and iron-sulfur (Fe-S) centers, to quinones in the respiratory chain. The immediate electron acceptor for the enzyme in this species is believed to be ubiquinone. Couples the redox reaction to proton translocation (for every two electrons transferred, four hydrogen ions are translocated across the cytoplasmic membrane), and thus conserves the redox energy in a proton gradient. The chain is NADH-quinone oxidoreductase subunit D from Nitratiruptor sp. (strain SB155-2).